A 436-amino-acid chain; its full sequence is UDP-N-acetylmuramate--L-alanine ligase (436 aa).

108–114 (GAHGKTS) serves as a coordination point for ATP.

It belongs to the MurCDEF family.

The protein resides in the cytoplasm. It carries out the reaction UDP-N-acetyl-alpha-D-muramate + L-alanine + ATP = UDP-N-acetyl-alpha-D-muramoyl-L-alanine + ADP + phosphate + H(+). It participates in cell wall biogenesis; peptidoglycan biosynthesis. Cell wall formation. This is UDP-N-acetylmuramate--L-alanine ligase from Bacillus cereus (strain Q1).